We begin with the raw amino-acid sequence, 257 residues long: uncharacterized protein (257 aa).

Positions 1–22 (MIHSKRLRLWLYLVLLAVFIGA) are cleaved as a signal peptide. C23 is lipidated: N-palmitoyl cysteine. The S-diacylglycerol cysteine moiety is linked to residue C23.

The protein belongs to the staphylococcal tandem lipoprotein family.

It is found in the cell membrane. This is an uncharacterized protein from Staphylococcus aureus (strain NCTC 8325 / PS 47).